The primary structure comprises 499 residues: Potassium voltage-gated channel subfamily A member 2 (499 aa).

The tract at residues 1–26 is disordered; sequence MTVATGDPVDEAAALPGHPQDTYDPE. The tract at residues 1–125 is tetramerization domain; it reads MTVATGDPVD…YELGEEAMEM (125 aa). Over 1-160 the chain is Cytoplasmic; the sequence is MTVATGDPVD…LLFEYPESSG (160 aa). Residues 161-182 traverse the membrane as a helical segment; the sequence is PARIIAIVSVMVILISIVSFCL. Topologically, residues 183–221 are extracellular; that stretch reads ETLPIFRDENEDMHGGGVTFHTYSNSTIGYQQSTSFTDP. Asn207 is a glycosylation site (N-linked (GlcNAc...) asparagine). Residues 222–243 form a helical membrane-spanning segment; the sequence is FFIVETLCIIWFSFEFLVRFFA. Cys244 carries the S-palmitoyl cysteine lipid modification. Over 244–254 the chain is Cytoplasmic; the sequence is CPSKAGFFTNI. A helical membrane pass occupies residues 255–275; the sequence is MNIIDIVAIIPYFITLGTELA. Residues 276-289 lie on the Extracellular side of the membrane; it reads EKPEDAQQGQQAMS. The chain crosses the membrane as a helical; Voltage-sensor span at residues 290–310; it reads LAILRVIRLVRVFRIFKLSRH. The Cytoplasmic portion of the chain corresponds to 311–325; the sequence is SKGLQILGQTLKASM. Residues 312-325 are S4-S5 linker; sequence KGLQILGQTLKASM. The chain crosses the membrane as a helical span at residues 326-347; the sequence is RELGLLIFFLFIGVILFSSAVY. Residues 348 to 361 are Extracellular-facing; it reads FAEADERDSQFPSI. Residues 362–373 constitute an intramembrane region (helical); it reads PDAFWWAVVSMT. A Selectivity filter motif is present at residues 374 to 379; the sequence is TVGYGD. Residues 374 to 381 lie within the membrane without spanning it; that stretch reads TVGYGDMV. Residues 382–388 lie on the Extracellular side of the membrane; the sequence is PTTIGGK. Residues 389–417 traverse the membrane as a helical segment; it reads IVGSLCAIAGVLTIALPVPVIVSNFNYFY. Over 418–499 the chain is Cytoplasmic; the sequence is HRETEGEEQA…VNITKMLTDV (82 aa). At Tyr429 the chain carries Phosphotyrosine. 4 positions are modified to phosphoserine: Ser434, Ser440, Ser441, and Ser449. Residue Tyr458 is modified to Phosphotyrosine. Position 468 is a phosphoserine (Ser468). A PDZ-binding motif is present at residues 497–499; it reads TDV.

It belongs to the potassium channel family. A (Shaker) (TC 1.A.1.2) subfamily. Kv1.2/KCNA2 sub-subfamily. As to quaternary structure, homotetramer and heterotetramer with other channel-forming alpha subunits, such as KCNA1, KCNA4, KCNA5, KCNA6 and KCNA7. Channel activity is regulated by interaction with beta subunits, including KCNAB1 and KCNAB2. Identified in a complex with KCNA1 and KCNAB2. Identified in a complex with KCNA5 and KCNAB1. Identified in a complex with KCNA4 and FYN. Interacts with PTK2B. Interacts (via C-terminus) with CTTN. Interacts with ADAM22. Interacts with CNTNAP2. Interacts (via C-terminus) with the PDZ domains of DLG1, DLG2 and DLG4. Interacts (via N-terminal cytoplasmic domain) with RHOA (GTP-bound form); this regulates channel activity by reducing location at the cell surface in response to CHRM1 activation. Interacts with DRD2. Interacts with SIGMAR1; cocaine consumption leads to increased interaction. Interacts with ADAM11. Interacts with LYNX1. Post-translationally, phosphorylated on tyrosine residues; phosphorylation increases in response to ischemia. Phosphorylated on tyrosine residues by activated PTK2B/PYK2. Phosphorylation on tyrosine residues suppresses ion channel activity. Phosphorylated on tyrosine residues in response to CHRM1 activation; this abolishes interaction with CTTN. This is probably due to endocytosis of the phosphorylated channel subunits. Phosphorylated on serine residues in response to increased cAMP levels; phosphorylation is apparently not catalyzed by PKA. N-glycosylated, with complex, sialylated N-glycans. In terms of tissue distribution, detected in brain. Detected in cerebellum. Detected in mitral cells in the olfactory bulb. Detected in cochlea. Detected in cerebellum, particularly in the basket cell axon plexus and in the terminal regions around Purkinje cells (at protein level). Detected in juxtaparanodal regions in sciatic nerve. Detected in Schwann cells from sciatic nerve. Detected in dopamine neurons in substantia nigra. Detected in large myelinated fibers in juxtaparanodes in the CA3 and CA1 areas of the hippocampus. Detected in brain, in punctae on fiber tracts in brain stem and spinal cord, and on axons in the juxtaparanodal regions of the node of Ranvier (at protein level). Detected in dopamine neurons in the midbrain.

It localises to the cell membrane. Its subcellular location is the membrane. The protein resides in the cell projection. The protein localises to the axon. It is found in the synapse. It localises to the endoplasmic reticulum membrane. Its subcellular location is the lamellipodium membrane. The protein resides in the synaptosome. The protein localises to the presynaptic cell membrane. It is found in the dendrite. It localises to the perikaryon. Its subcellular location is the cell junction. The protein resides in the paranodal septate junction. It catalyses the reaction K(+)(in) = K(+)(out). Its activity is regulated as follows. Inhibited by 4-aminopyridine (4-AP), dendrotoxin (DTX) and charybdotoxin (CTX), but not by tetraethylammonium (TEA). Inhibited by tityustoxin-K alpha (TsTX-Kalpha), a toxin that is highly specific for KCNA2. Inhibited by maurotoxin. Inhibited by kappaM conotoxins kappaM-RIIIJ and kappaM-RIIIK. In terms of biological role, voltage-gated potassium channel that mediates transmembrane potassium transport in excitable membranes, primarily in the brain and the central nervous system, but also in the cardiovascular system. Prevents aberrant action potential firing and regulates neuronal output. Forms tetrameric potassium-selective channels through which potassium ions pass in accordance with their electrochemical gradient. The channel alternates between opened and closed conformations in response to the voltage difference across the membrane. Can form functional homotetrameric channels and heterotetrameric channels that contain variable proportions of KCNA1, KCNA2, KCNA4, KCNA5, KCNA6, KCNA7, and possibly other family members as well; channel properties depend on the type of alpha subunits that are part of the channel. Channel properties are modulated by cytoplasmic beta subunits that regulate the subcellular location of the alpha subunits and promote rapid inactivation of delayed rectifier potassium channels. In vivo, membranes probably contain a mixture of heteromeric potassium channel complexes, making it difficult to assign currents observed in intact tissues to any particular potassium channel family member. Homotetrameric KCNA2 forms a delayed-rectifier potassium channel that opens in response to membrane depolarization, followed by slow spontaneous channel closure. In contrast, a heteromultimer formed by KCNA2 and KCNA4 shows rapid inactivation. Contributes to the regulation of action potentials in neurons. KCNA2-containing channels play a presynaptic role and prevent hyperexcitability and aberrant action potential firing. Response to toxins that are selective for KCNA1, respectively for KCNA2, suggests that heteromeric potassium channels composed of both KCNA1 and KCNA2 play a role in pacemaking and regulate the output of deep cerebellar nuclear neurons. Response to toxins that are selective for KCNA2-containing potassium channels suggests that in Purkinje cells, dendritic subthreshold KCNA2-containing potassium channels prevent random spontaneous calcium spikes, suppressing dendritic hyperexcitability without hindering the generation of somatic action potentials, and thereby play an important role in motor coordination. KCNA2-containing channels play a role in GABAergic transmission from basket cells to Purkinje cells in the cerebellum, and thereby play an import role in motor coordination. Plays a role in the induction of long-term potentiation of neuron excitability in the CA3 layer of the hippocampus. May function as down-stream effector for G protein-coupled receptors and inhibit GABAergic inputs to basolateral amygdala neurons. May contribute to the regulation of neurotransmitter release, such as gamma-aminobutyric acid (GABA). Contributes to the regulation of the axonal release of the neurotransmitter dopamine. Reduced KCNA2 expression plays a role in the perception of neuropathic pain after peripheral nerve injury, but not acute pain. Plays a role in the regulation of the time spent in non-rapid eye movement (NREM) sleep. The sequence is that of Potassium voltage-gated channel subfamily A member 2 (Kcna2) from Mus musculus (Mouse).